Here is a 269-residue protein sequence, read N- to C-terminus: MRVALKLAYIGTEFHGSQIQPNVETVEGELFKALRNLGIIESPKSANYTCAGRTDAGVHALEQVVAFDTDKLNLAIPRVINSELTPGIWVWAHAEVPLSFDARRDAVSRHYRYVMSGKEYDISKIREASKFLLGTHDFENFSRTNGEKSTVRTIERIDARIDGELIKIDVVGNSFLWNMVRKIVTALSMIGKGVRDTDWLLQMLNPEIYEEGIESAPAYGLTLLKVNYNEKIEWIEDNYSIRRAGDQNQKRILRHRVMAEVLEELISHE.

The Nucleophile role is filled by Asp55. Tyr111 is a binding site for substrate.

It belongs to the tRNA pseudouridine synthase TruA family.

It carries out the reaction uridine(38/39/40) in tRNA = pseudouridine(38/39/40) in tRNA. Its function is as follows. Formation of pseudouridine at positions 38, 39 and 40 in the anticodon stem and loop of transfer RNAs. The protein is tRNA pseudouridine synthase A of Methanosarcina barkeri (strain Fusaro / DSM 804).